The following is a 123-amino-acid chain: Small ribosomal subunit protein uS12 (123 aa).

Residues 1 to 45 (MPTINQLIRKKRQSGATRKKSPALQKSPQKRGVCLQVKTKTPKKP) are disordered. Residues 8 to 21 (IRKKRQSGATRKKS) show a composition bias toward basic residues.

This sequence belongs to the universal ribosomal protein uS12 family. In terms of assembly, part of the 30S ribosomal subunit. Contacts proteins S8 and S17. May interact with IF1 in the 30S initiation complex.

Its function is as follows. With S4 and S5 plays an important role in translational accuracy. Functionally, interacts with and stabilizes bases of the 16S rRNA that are involved in tRNA selection in the A site and with the mRNA backbone. Located at the interface of the 30S and 50S subunits, it traverses the body of the 30S subunit contacting proteins on the other side and probably holding the rRNA structure together. The combined cluster of proteins S8, S12 and S17 appears to hold together the shoulder and platform of the 30S subunit. This chain is Small ribosomal subunit protein uS12, found in Chlamydia muridarum (strain MoPn / Nigg).